Consider the following 120-residue polypeptide: NAD(P)H-quinone oxidoreductase subunit 3, chloroplastic (120 aa).

3 helical membrane passes run 9-29 (YFWL…PISS), 64-84 (MFAS…PWAM), and 89-109 (LGVP…VGSV).

Belongs to the complex I subunit 3 family. As to quaternary structure, NDH is composed of at least 16 different subunits, 5 of which are encoded in the nucleus.

The protein resides in the plastid. Its subcellular location is the chloroplast thylakoid membrane. The catalysed reaction is a plastoquinone + NADH + (n+1) H(+)(in) = a plastoquinol + NAD(+) + n H(+)(out). It carries out the reaction a plastoquinone + NADPH + (n+1) H(+)(in) = a plastoquinol + NADP(+) + n H(+)(out). In terms of biological role, NDH shuttles electrons from NAD(P)H:plastoquinone, via FMN and iron-sulfur (Fe-S) centers, to quinones in the photosynthetic chain and possibly in a chloroplast respiratory chain. The immediate electron acceptor for the enzyme in this species is believed to be plastoquinone. Couples the redox reaction to proton translocation, and thus conserves the redox energy in a proton gradient. The polypeptide is NAD(P)H-quinone oxidoreductase subunit 3, chloroplastic (Huperzia lucidula (Shining clubmoss)).